Here is a 330-residue protein sequence, read N- to C-terminus: NADH-quinone oxidoreductase subunit H (330 aa).

The next 8 helical transmembrane spans lie at 5–25 (LLTL…VLTL), 78–98 (WVFM…FAVI), 120–140 (IGLL…ALGG), 155–175 (AMAQ…PVVM), 191–211 (SLPN…AIMA), 243–263 (FFVG…VLFL), 271–291 (LPGI…FIWV), and 308–328 (WKIL…WLIW).

Belongs to the complex I subunit 1 family. In terms of assembly, NDH-1 is composed of 14 different subunits. Subunits NuoA, H, J, K, L, M, N constitute the membrane sector of the complex.

It is found in the cell inner membrane. It catalyses the reaction a quinone + NADH + 5 H(+)(in) = a quinol + NAD(+) + 4 H(+)(out). In terms of biological role, NDH-1 shuttles electrons from NADH, via FMN and iron-sulfur (Fe-S) centers, to quinones in the respiratory chain. The immediate electron acceptor for the enzyme in this species is believed to be ubiquinone. Couples the redox reaction to proton translocation (for every two electrons transferred, four hydrogen ions are translocated across the cytoplasmic membrane), and thus conserves the redox energy in a proton gradient. This subunit may bind ubiquinone. This is NADH-quinone oxidoreductase subunit H from Syntrophotalea carbinolica (strain DSM 2380 / NBRC 103641 / GraBd1) (Pelobacter carbinolicus).